Here is a 65-residue protein sequence, read N- to C-terminus: uncharacterized protein (65 aa).

A helical transmembrane segment spans residues 37 to 57 (ILAIMTSVLPVLLIYIIWIFI).

The protein localises to the cell membrane. This is an uncharacterized protein from Bacillus subtilis (strain 168).